We begin with the raw amino-acid sequence, 183 residues long: Protein P7 (183 aa).

It localises to the host nucleus. May play a role in inhibition of the host immune system by counteracting the type I interferon response. The sequence is that of Protein P7 from Gadus morhua (Atlantic cod).